An 87-amino-acid chain; its full sequence is Small ribosomal subunit protein bS20 (87 aa).

A disordered region spans residues 1-27 (MANIKSAKKRAVQSEKRRKHNASRRSM).

It belongs to the bacterial ribosomal protein bS20 family.

Functionally, binds directly to 16S ribosomal RNA. The sequence is that of Small ribosomal subunit protein bS20 from Pectobacterium carotovorum subsp. carotovorum (strain PC1).